The chain runs to 246 residues: UDP-N-acetyl-D-mannosaminuronic acid transferase (246 aa).

The protein belongs to the glycosyltransferase 26 family.

It carries out the reaction UDP-N-acetyl-alpha-D-mannosaminouronate + N-acetyl-alpha-D-glucosaminyl-di-trans,octa-cis-undecaprenyl diphosphate = beta-D-ManNAcA-(1-&gt;4)-alpha-D-GlcNAc-di-trans,octa-cis-undecaprenyl diphosphate + UDP + H(+). The protein operates within bacterial outer membrane biogenesis; enterobacterial common antigen biosynthesis. In terms of biological role, catalyzes the synthesis of Und-PP-GlcNAc-ManNAcA (Lipid II), the second lipid-linked intermediate involved in enterobacterial common antigen (ECA) synthesis. This Yersinia pestis bv. Antiqua (strain Antiqua) protein is UDP-N-acetyl-D-mannosaminuronic acid transferase.